A 506-amino-acid polypeptide reads, in one-letter code: Histidine--tRNA ligase, mitochondrial (506 aa).

Residues 1 to 33 (MPLLGLLPRRAWASLLSQLLRPPCASCTGAVRC) constitute a mitochondrion transit peptide. A Phosphoserine modification is found at Ser67. Residues 131–133 (DLT), Arg158, Gln174, Asp178, Arg327, and 331–332 (YY) contribute to the L-histidine site. Lys444 is modified (N6-acetyllysine).

The protein belongs to the class-II aminoacyl-tRNA synthetase family. As to quaternary structure, homodimer. A high level expression is seen in the heart, kidney and skeletal muscle while a lower level expression is seen in the brain and liver.

The protein resides in the mitochondrion. It carries out the reaction tRNA(His) + L-histidine + ATP = L-histidyl-tRNA(His) + AMP + diphosphate + H(+). In terms of biological role, mitochondrial aminoacyl-tRNA synthetase that catalyzes the ATP-dependent ligation of histidine to the 3'-end of its cognate tRNA, via the formation of an aminoacyl-adenylate intermediate (His-AMP). The sequence is that of Histidine--tRNA ligase, mitochondrial (HARS2) from Homo sapiens (Human).